The following is a 699-amino-acid chain: TBC1 domain family member 23 (699 aa).

In terms of domain architecture, Rab-GAP TBC spans proline 44–alanine 225. Serine 300 carries the post-translational modification Phosphoserine. One can recognise a Rhodanese domain in the interval glutamate 334–valine 446. Over residues serine 459–serine 479 the composition is skewed to polar residues. The tract at residues serine 459–methionine 483 is disordered. 3 positions are modified to phosphoserine: serine 469, serine 474, and serine 507. Phosphothreonine is present on threonine 514. Residues threonine 514–aspartate 573 are may mediate the interaction with C17orf75, FAM91A1 and WDR11. The segment at threonine 514–serine 699 is may mediate the interaction with WASHC1. 2 positions are modified to phosphoserine: serine 520 and serine 571. Residues aspartate 574–serine 699 are may mediate the interaction with FKBP15 and WASHC2; required for endosome to Golgi trafficking.

In terms of assembly, directly interacts with GOLGA1 and GOLGA4. Interacts with FAM91A1, C17ORF75 and WDR11; the interaction recruits TBC1D23 to AP-1-derived vesicles. Directly interacts with WASHC1 and WASHC2A/FAM21A. Interacts with FKBP15. In terms of tissue distribution, isoform 1: Widely expressed, including in fetal adult brain (corpus callosum, pons, cerebellum), spinal cord, heart, skeletal muscle, thymus and bone marrow, and at lower levels in spleen. Hardly detected in liver, kidney, colon and testis. Isoform 2: Expressed at high levels in liver, kidney, colon and testis. Hardly detected in tissues expressing high levels of isoform 1. Expressed at low levels in spleen.

It localises to the golgi apparatus. It is found in the trans-Golgi network. The protein resides in the cytoplasmic vesicle. Putative Rab GTPase-activating protein which plays a role in vesicular trafficking. Involved in endosome-to-Golgi trafficking. Acts as a bridging protein by binding simultaneously to golgins, including GOLGA1 and GOLGA4, located at the trans-Golgi, and to the WASH complex, located on endosome-derived vesicles. Together with WDR11 complex facilitates the golgin-mediated capture of vesicles generated using AP-1. Plays a role in brain development, including in cortical neuron positioning. May also be important for neurite outgrowth, possibly through its involvement in membrane trafficking and cargo delivery, 2 processes that are essential for axonal and dendritic growth. May act as a general inhibitor of innate immunity signaling, strongly inhibiting multiple TLR and dectin/CLEC7A-signaling pathways. Does not alter initial activation events, but instead affects maintenance of inflammatory gene expression several hours after bacterial lipopolysaccharide (LPS) challenge. This chain is TBC1 domain family member 23 (TBC1D23), found in Homo sapiens (Human).